The following is a 434-amino-acid chain: UDP-N-acetylmuramoylalanine--D-glutamate ligase (434 aa).

126 to 132 (GTSGKTT) provides a ligand contact to ATP.

This sequence belongs to the MurCDEF family.

It localises to the cytoplasm. The enzyme catalyses UDP-N-acetyl-alpha-D-muramoyl-L-alanine + D-glutamate + ATP = UDP-N-acetyl-alpha-D-muramoyl-L-alanyl-D-glutamate + ADP + phosphate + H(+). It functions in the pathway cell wall biogenesis; peptidoglycan biosynthesis. Functionally, cell wall formation. Catalyzes the addition of glutamate to the nucleotide precursor UDP-N-acetylmuramoyl-L-alanine (UMA). This chain is UDP-N-acetylmuramoylalanine--D-glutamate ligase, found in Desulfovibrio desulfuricans (strain ATCC 27774 / DSM 6949 / MB).